The primary structure comprises 774 residues: MHHNNHHHGHHGRYQHHHNQHLKRPLKGGTEDDDILEITPIGSGSEVGRSCVLLKYKGKKVMFDCGVHPAYSGLVSLPFFDSIESDIPDIDLLLVSHFHLDHAAAVPYFVGKTKFKGRVFMTHPTKAIYGMLLSDYVKVSNITRDDDMLFDKSDLDRSLEKIEKVRYRQKVEHNGIKVTCFNAGHVLGAAMFMIEIAGVKILYTGDFSRQEDRHLMGAETPPVKVDVLIIESTYGVQVHEPRLEREKRFTSSVHQVVERNGKCLIPVFALGRAQELLLILDEYWIANPQLHHVPIYYASALAKKCMGVYRTYINMMNDRVRAQFDVSNPFEFKHIKNIKGIESFDDRGPCVFMASPGMLQSGLSRQLFERWCSDKRNGIVIPGYSVEGTLAKHIMSEPAEITRLDNVNVPLNLTVSYVSFSAHSDFLQTSEFIQEIQPPHVVLVHGDANEMSRLRQSLVAKFKTINVLTPKNAMSVALEFRPEKVAKTLGSIITNPPKQNDIIQGILVTKDFTHHILSASDIHNYTNLKTNIIKQKLTLPFAQTYHILISTLEQIYEQIIESTESTGGGGNEKPTITIYNEIKLIYNIGVSIILEWNSNTVNDMICDSIIALISQIELNPLSIKVRNPNFNNIDEKEEITKDDIEKEKEKEKEQQDGDDDDDDEIQIKVVSRKSRKLSNKLNTITEVKLLLEQQYGNFKVDENDPLILHFNLDNQKAIIHLETLTVESLDQILKQKIENSIKRIILSVSPIGNNLNQINNQDNENNIKMETDFK.

Residues Met1–Leu26 show a composition bias toward basic residues. Residues Met1–Thr30 form a disordered region. Residues His97, His99, Asp101, His102, His185, and Asp206 each coordinate Zn(2+). The active-site Proton donor is His423. Residue His445 participates in Zn(2+) binding. A disordered region spans residues Lys636–Ile665. Basic and acidic residues predominate over residues Glu638–Gln655.

It belongs to the metallo-beta-lactamase superfamily. RNA-metabolizing metallo-beta-lactamase-like family. CPSF3 subfamily. As to quaternary structure, component of the cleavage and polyadenylation specificity factor (CPSF) complex. Zn(2+) serves as cofactor.

Its subcellular location is the nucleus. Component of the cleavage and polyadenylation specificity factor (CPSF) complex that play a key role in pre-mRNA 3'-end formation, recognizing the AAUAAA signal sequence and interacting with poly(A) polymerase and other factors to bring about cleavage and poly(A) addition. Has endonuclease activity, and functions as an mRNA 3'-end-processing endonuclease. This is Cleavage and polyadenylation specificity factor subunit 3 (cpsf3) from Dictyostelium discoideum (Social amoeba).